Here is a 200-residue protein sequence, read N- to C-terminus: Cytochrome c biogenesis ATP-binding export protein CcmA (200 aa).

An ABC transporter domain is found at 1-199 (MRLTGRGLRC…AARELRIGGA (199 aa)). 35–42 (GANGAGKT) lines the ATP pocket.

The protein belongs to the ABC transporter superfamily. CcmA exporter (TC 3.A.1.107) family. As to quaternary structure, the complex is composed of two ATP-binding proteins (CcmA) and two transmembrane proteins (CcmB).

Its subcellular location is the cell inner membrane. The catalysed reaction is heme b(in) + ATP + H2O = heme b(out) + ADP + phosphate + H(+). Functionally, part of the ABC transporter complex CcmAB involved in the biogenesis of c-type cytochromes; once thought to export heme, this seems not to be the case, but its exact role is uncertain. Responsible for energy coupling to the transport system. This chain is Cytochrome c biogenesis ATP-binding export protein CcmA, found in Rhodopseudomonas palustris (strain BisB18).